Here is a 271-residue protein sequence, read N- to C-terminus: DNA repair protein RecO (271 aa).

The disordered stretch occupies residues 248–271; sequence AVGVEDSVRQDGDRDSTTRTPSSA. A compositionally biased stretch (basic and acidic residues) spans 253–264; it reads DSVRQDGDRDST.

Belongs to the RecO family.

Its function is as follows. Involved in DNA repair and RecF pathway recombination. The protein is DNA repair protein RecO of Rhodococcus opacus (strain B4).